Reading from the N-terminus, the 124-residue chain is Colorectal cancer-associated protein 1 (124 aa).

The helical transmembrane segment at 77-97 threads the bilayer; the sequence is LYGCFCVGLVSGMAISVLLLA.

In terms of tissue distribution, expressed in gastrointestinal and immune tissue, as well as prostate, testis and ovary. Expressed in lamina propria and eosinophils but not in epithelial cells. Expression is greater in benign adjacent tissues than in colon tumors.

The protein localises to the membrane. This chain is Colorectal cancer-associated protein 1 (COLCA1), found in Homo sapiens (Human).